A 485-amino-acid chain; its full sequence is UDP-N-acetylmuramate--L-alanine ligase (485 aa).

120–126 (GSHGKTT) lines the ATP pocket.

Belongs to the MurCDEF family.

The protein localises to the cytoplasm. It carries out the reaction UDP-N-acetyl-alpha-D-muramate + L-alanine + ATP = UDP-N-acetyl-alpha-D-muramoyl-L-alanine + ADP + phosphate + H(+). Its pathway is cell wall biogenesis; peptidoglycan biosynthesis. Functionally, cell wall formation. This Rickettsia peacockii (strain Rustic) protein is UDP-N-acetylmuramate--L-alanine ligase.